A 1617-amino-acid chain; its full sequence is Mitogen-activated protein kinase kinae kinase bck1 (1617 aa).

Disordered regions lie at residues 1 to 73 (MDGQ…SQLQ), 167 to 199 (GPVHHLYESSGGDGSAYKRDGTVPPTPSARTMP), 211 to 253 (SVAS…GGMS), 345 to 399 (RQIH…SPNL), 455 to 555 (DHRR…SSSY), 568 to 633 (KRSK…LRGK), 739 to 820 (GVPL…ISPE), 832 to 1144 (EHKR…RGDI), and 1165 to 1277 (IDLD…EILR). Low complexity predominate over residues 19 to 28 (TQPSQSHMLS). A compositionally biased stretch (pro residues) spans 44-60 (VMPPPPPGPPPGPPPGP). Polar residues predominate over residues 220–248 (TAQNHQSQTGQTNEPTKSPSHRQNNSNTL). Polar residues predominate over residues 482-504 (KSGSPATQHATLNQGLSSSSTGD). The segment covering 524–533 (RYYESRKGQE) has biased composition (basic and acidic residues). Composition is skewed to polar residues over residues 535-555 (IRPSPQEMCSRQWTGETSSSY) and 586-596 (ESPTSPVNLRQ). Basic and acidic residues-rich tracts occupy residues 832–841 (EHKREVERKQ) and 871–885 (FDERRVSPYEDKKAD). 2 stretches are compositionally biased toward polar residues: residues 897-907 (PQESYTLTRIN) and 956-980 (GGKQTNFGSFGSPTQGNTKSAPQSS). Composition is skewed to basic and acidic residues over residues 1128–1140 (EDERPTPRRDSFA) and 1189–1198 (PENDLHKKEN). Polar residues-rich tracts occupy residues 1199-1208 (QPSSSYTGEM) and 1257-1272 (NQASRSRSIHTGNQKS). The Protein kinase domain maps to 1323–1596 (IIRGQLIGKG…QTLLTRHPFC (274 aa)). Residues 1329 to 1337 (IGKGTYGRV) and Lys-1352 each bind ATP.

It belongs to the protein kinase superfamily. STE Ser/Thr protein kinase family. MAP kinase kinase kinase subfamily.

The catalysed reaction is L-seryl-[protein] + ATP = O-phospho-L-seryl-[protein] + ADP + H(+). It carries out the reaction L-threonyl-[protein] + ATP = O-phospho-L-threonyl-[protein] + ADP + H(+). Functionally, mitogen-activated protein kinase kinase kinase; part of cell wall integrity (CWI) signaling pathway composed of pkcA, the bck1-mkk2-mpka MAPK cascade and the downstream rlmA transcription regulator. The CWI signaling pathway regulates cell wall integrity and pyomelanin formation. CWI also controls oxidative stress response, gliotoxin production, iron adaptation and asexual development. Finally, CWI is constitutively required for A.fumigatus to cope with the temperature increase found in the mammalian lung environment, during infection. The polypeptide is Mitogen-activated protein kinase kinae kinase bck1 (Aspergillus fumigatus (strain ATCC MYA-4609 / CBS 101355 / FGSC A1100 / Af293) (Neosartorya fumigata)).